Consider the following 312-residue polypeptide: Homoserine kinase (312 aa).

91–101 contacts ATP; sequence PVASGLGSSAC.

It belongs to the GHMP kinase family. Homoserine kinase subfamily.

It is found in the cytoplasm. It carries out the reaction L-homoserine + ATP = O-phospho-L-homoserine + ADP + H(+). The protein operates within amino-acid biosynthesis; L-threonine biosynthesis; L-threonine from L-aspartate: step 4/5. Catalyzes the ATP-dependent phosphorylation of L-homoserine to L-homoserine phosphate. This chain is Homoserine kinase, found in Blochmanniella pennsylvanica (strain BPEN).